A 795-amino-acid polypeptide reads, in one-letter code: Protein translocase subunit SecA 2 (795 aa).

ATP-binding positions include Gln-84, 102 to 106 (GEGKT), and Asp-496.

Belongs to the SecA family. In terms of assembly, monomer and homodimer. Part of the essential Sec protein translocation apparatus which comprises SecA, SecYEG and auxiliary proteins SecDF. Other proteins may also be involved.

It localises to the cell membrane. The protein resides in the cytoplasm. The enzyme catalyses ATP + H2O + cellular proteinSide 1 = ADP + phosphate + cellular proteinSide 2.. In terms of biological role, part of the Sec protein translocase complex. Interacts with the SecYEG preprotein conducting channel. Has a central role in coupling the hydrolysis of ATP to the transfer of proteins into and across the cell membrane, serving as an ATP-driven molecular motor driving the stepwise translocation of polypeptide chains across the membrane. This chain is Protein translocase subunit SecA 2, found in Streptococcus agalactiae serotype III (strain NEM316).